A 466-amino-acid polypeptide reads, in one-letter code: Asparagine--tRNA ligase (466 aa).

This sequence belongs to the class-II aminoacyl-tRNA synthetase family. As to quaternary structure, homodimer.

It localises to the cytoplasm. It carries out the reaction tRNA(Asn) + L-asparagine + ATP = L-asparaginyl-tRNA(Asn) + AMP + diphosphate + H(+). The polypeptide is Asparagine--tRNA ligase (Idiomarina loihiensis (strain ATCC BAA-735 / DSM 15497 / L2-TR)).